A 174-amino-acid chain; its full sequence is Ferritin, heavy subunit (174 aa).

The region spanning 7 to 156 (QNFHKDCEAA…DWVTNLRRLG (150 aa)) is the Ferritin-like diiron domain. Fe cation is bound by residues Glu24, Glu59, His62, Glu104, and Gln138.

This sequence belongs to the ferritin family. In terms of assembly, in liver, forms a heteromer consisting of middle and heavy subunits. The functional molecule forms a roughly spherical shell with a diameter of 12 nm and contains a central cavity into which the insoluble mineral iron core is deposited. Liver (at protein level).

The enzyme catalyses 4 Fe(2+) + O2 + 4 H(+) = 4 Fe(3+) + 2 H2O. Functionally, stores iron in a soluble, non-toxic, readily available form. Important for iron homeostasis. Has ferroxidase activity. Iron is taken up in the ferrous form and deposited as ferric hydroxides after oxidation. Also plays a role in delivery of iron to cells. Mediates iron uptake in capsule cells of the developing kidney. Delivery to lysosomes is mediated by the cargo receptor NCOA4 for autophagic degradation and release of iron. The polypeptide is Ferritin, heavy subunit (Trematomus newnesi (Dusky notothen)).